The sequence spans 1416 residues: Telomere-associated protein RIF1 (1416 aa).

4 disordered regions span residues 789–858 (PIRK…PVVQ), 886–984 (PEVA…HLTG), 1021–1054 (ARAQ…QAPP), and 1166–1186 (TART…APEE). The segment covering 928–945 (GSSGDPAASAGAVAAGEM) has biased composition (low complexity). The segment covering 1029 to 1050 (QVSTPTSELNELTGTDHTSTPI) has biased composition (polar residues).

This sequence belongs to the RIF1 family. Highly divergent. Interacts with Pp1-87b. Interacts with SuUR (via SNF2-like region). Phosphorylated, probably by Cdk1; phosphorylation regulates dissociation from heterochromatin. In terms of tissue distribution, expressed in nurse cells and follicle cells in the adult female (at protein level). Detected in adult at extremely low levels.

It localises to the nucleus. It is found in the chromosome. Its subcellular location is the telomere. Regulates the timing of initiation of DNA replication. Functions in copy number control by promoting the underreplication of DNA, which is found in many late replicating euchromatic regions of salivary gland polytene chromosomes. Promotes underreplication by localizing to active DNA replication forks in a partially SuUR-dependent manner, and inhibiting replication fork progression. Might also work as an adapter to recruit Pp1-87B to multiple sites on the chromosome and may function with Pp1-87B to mediate underreplication. Plays an essential role in embryonic development, in the transition from larvae to pupae and, probably, in proliferating tissues later on. In embryos, during mid-blastula transition, binds to and selectively delays the replication of large blocks of repetitive DNA satellite sequences during S phase in response to the activity of Cdk1; maternal Rif1 is specifically required for the normal extension of S phase 14. Unlike mammalian orthologs, does not appear to play a role in DNA damage repair. This Drosophila melanogaster (Fruit fly) protein is Telomere-associated protein RIF1.